The chain runs to 218 residues: ATP-dependent Clp protease proteolytic subunit 2 (218 aa).

The protein belongs to the peptidase S14 family. In terms of assembly, fourteen ClpP subunits assemble into 2 heptameric rings which stack back to back to give a disk-like structure with a central cavity, resembling the structure of eukaryotic proteasomes.

It localises to the cytoplasm. The catalysed reaction is Hydrolysis of proteins to small peptides in the presence of ATP and magnesium. alpha-casein is the usual test substrate. In the absence of ATP, only oligopeptides shorter than five residues are hydrolyzed (such as succinyl-Leu-Tyr-|-NHMec, and Leu-Tyr-Leu-|-Tyr-Trp, in which cleavage of the -Tyr-|-Leu- and -Tyr-|-Trp bonds also occurs).. In terms of biological role, cleaves peptides in various proteins in a process that requires ATP hydrolysis. Has a chymotrypsin-like activity. Plays a major role in the degradation of misfolded proteins. The chain is ATP-dependent Clp protease proteolytic subunit 2 from Gloeobacter violaceus (strain ATCC 29082 / PCC 7421).